We begin with the raw amino-acid sequence, 100 residues long: DNA base-flipping protein (100 aa).

This sequence belongs to the MGMT family. ATL subfamily.

Its function is as follows. Involved in DNA damage recognition. Binds DNA containing O(6)-methylguanine. Binds to the damaged base and flips the base out of the DNA duplex into an extrahelical conformation, which allows processing by repair proteins. The sequence is that of DNA base-flipping protein from Vibrio parahaemolyticus serotype O3:K6 (strain AQ3810).